Reading from the N-terminus, the 624-residue chain is E3 ubiquitin-protein ligase RLIM (624 aa).

Methionine 1 carries the post-translational modification N-acetylmethionine. Positions 1–11 (MENSDSNDKGS) are enriched in basic and acidic residues. 5 disordered regions span residues 1 to 25 (MENS…QMDR), 72 to 251 (KEGP…SQTF), 257 to 276 (NETE…QQIS), 291 to 363 (TRNA…RGGF), and 424 to 522 (SDSE…TFDE). Positions 104-132 (SVRQTGNTTRSGQRGNQSWRAVSRTNPNS) are enriched in polar residues. Over residues 142–153 (NVNRNNGSQNSE) the composition is skewed to low complexity. The residue at position 164 (serine 164) is a Phosphoserine. Positions 165–188 (GENVENNSQRQVENPRSESTSARP) are enriched in polar residues. Phosphoserine is present on residues serine 195, serine 228, serine 230, and serine 276. Positions 214-229 (RSPDHRRTRARAERSR) are enriched in basic and acidic residues. Positions 291 to 315 (TRNASQGAGSSDTAASGESTGSGQR) are enriched in polar residues. Residues 329 to 339 (RPGEYRQRDSI) show a composition bias toward basic and acidic residues. Positions 340-356 (ASRTRSRSQTPNNTVTY) are enriched in polar residues. Residues 445–454 (GRGGSGGGSS) are compositionally biased toward gly residues. The span at 455-507 (SGSSSSSSSSSSSSSSSSSSSSPSSSSGGESSETSSDLFEGSNEGSSSSGSSG) shows a compositional bias: low complexity. The RING-type zinc finger occupies 570–611 (CSVCITEYTEGNKLRKLPCSHEYHVHCIDRWLSENSTCPICR). Residues 621–624 (ESVV) carry the PDZ-binding motif.

It belongs to the RNF12 family. Interacts with LIM/homeobox factors such as LHX3. Interacts with LDB1, LDB2 and SIN3A. Interacts with LIMK1. Interacts (via N-terminus) with TERF1. Interacts (via C-terminus) with ESR1. In terms of tissue distribution, expressed in many tissues.

The protein resides in the nucleus. It catalyses the reaction S-ubiquitinyl-[E2 ubiquitin-conjugating enzyme]-L-cysteine + [acceptor protein]-L-lysine = [E2 ubiquitin-conjugating enzyme]-L-cysteine + N(6)-ubiquitinyl-[acceptor protein]-L-lysine.. It participates in protein modification; protein ubiquitination. Functionally, E3 ubiquitin-protein ligase. Acts as a negative coregulator for LIM homeodomain transcription factors by mediating the ubiquitination and subsequent degradation of LIM cofactors LDB1 and LDB2 and by mediating the recruitment the SIN3a/histone deacetylase corepressor complex. Ubiquitination and degradation of LIM cofactors LDB1 and LDB2 allows DNA-bound LIM homeodomain transcription factors to interact with other protein partners such as RLIM. Plays a role in telomere length-mediated growth suppression by mediating the ubiquitination and degradation of TERF1. By targeting ZFP42 for degradation, acts as an activator of random inactivation of X chromosome in the embryo, a stochastic process in which one X chromosome is inactivated to minimize sex-related dosage differences of X-encoded genes in somatic cells of female placental mammals. The sequence is that of E3 ubiquitin-protein ligase RLIM (RLIM) from Homo sapiens (Human).